A 483-amino-acid chain; its full sequence is Glutamate--tRNA ligase (483 aa).

The 'HIGH' region motif lies at 9-19; sequence PSPTGFLHIGN. The 'KMSKS' region motif lies at 253-257; the sequence is KLSKR. ATP is bound at residue Lys-256.

The protein belongs to the class-I aminoacyl-tRNA synthetase family. Glutamate--tRNA ligase type 1 subfamily. In terms of assembly, monomer.

It is found in the cytoplasm. It catalyses the reaction tRNA(Glu) + L-glutamate + ATP = L-glutamyl-tRNA(Glu) + AMP + diphosphate. In terms of biological role, catalyzes the attachment of glutamate to tRNA(Glu) in a two-step reaction: glutamate is first activated by ATP to form Glu-AMP and then transferred to the acceptor end of tRNA(Glu). This chain is Glutamate--tRNA ligase, found in Mycoplasma capricolum subsp. capricolum (strain California kid / ATCC 27343 / NCTC 10154).